Consider the following 119-residue polypeptide: Large ribosomal subunit protein bL17 (119 aa).

Belongs to the bacterial ribosomal protein bL17 family. Part of the 50S ribosomal subunit. Contacts protein L32.

The protein is Large ribosomal subunit protein bL17 of Malacoplasma penetrans (strain HF-2) (Mycoplasma penetrans).